The sequence spans 1119 residues: DNA-directed RNA polymerase subunit beta (1119 aa).

It belongs to the RNA polymerase beta chain family. As to quaternary structure, the RNAP catalytic core consists of 2 alpha, 1 beta, 1 beta' and 1 omega subunit. When a sigma factor is associated with the core the holoenzyme is formed, which can initiate transcription.

The enzyme catalyses RNA(n) + a ribonucleoside 5'-triphosphate = RNA(n+1) + diphosphate. In terms of biological role, DNA-dependent RNA polymerase catalyzes the transcription of DNA into RNA using the four ribonucleoside triphosphates as substrates. The protein is DNA-directed RNA polymerase subunit beta of Thermus thermophilus (strain ATCC 27634 / DSM 579 / HB8).